Reading from the N-terminus, the 346-residue chain is Extracellular protease (346 aa).

The signal sequence occupies residues 1–21 (MMKATPIALLLAGVLASPLCA). His-296 is a Zn(2+) binding site. The active site involves Glu-297. The Zn(2+) site is built by His-300 and Asp-309.

Belongs to the peptidase M35 family. The cofactor is Zn(2+).

Its function is as follows. Heat-labile protease. In Aeromonas hydrophila, this protein is Extracellular protease.